The primary structure comprises 175 residues: Methylated-DNA--protein-cysteine methyltransferase (175 aa).

The Nucleophile; methyl group acceptor role is filled by cysteine 142.

This sequence belongs to the MGMT family.

The protein localises to the cytoplasm. It catalyses the reaction a 6-O-methyl-2'-deoxyguanosine in DNA + L-cysteinyl-[protein] = S-methyl-L-cysteinyl-[protein] + a 2'-deoxyguanosine in DNA. The enzyme catalyses a 4-O-methyl-thymidine in DNA + L-cysteinyl-[protein] = a thymidine in DNA + S-methyl-L-cysteinyl-[protein]. Functionally, involved in the cellular defense against the biological effects of O6-methylguanine (O6-MeG) and O4-methylthymine (O4-MeT) in DNA. Repairs the methylated nucleobase in DNA by stoichiometrically transferring the methyl group to a cysteine residue in the enzyme. This is a suicide reaction: the enzyme is irreversibly inactivated. The protein is Methylated-DNA--protein-cysteine methyltransferase of Thermococcus barophilus (strain DSM 11836 / MP).